A 324-amino-acid chain; its full sequence is Annexin A3 (324 aa).

4 Annexin repeats span residues 19–90, 91–162, 174–246, and 250–321; these read FNPS…ALIT, APAV…TLAD, HLAK…AVVR, and NTPA…KICG. N6-acetyllysine is present on Lys178. The residue at position 268 (Thr268) is a Phosphothreonine.

This sequence belongs to the annexin family.

In terms of biological role, inhibitor of phospholipase A2, also possesses anti-coagulant properties. This Rattus norvegicus (Rat) protein is Annexin A3 (Anxa3).